Consider the following 766-residue polypeptide: Alpha-onocerin synthase LCD (766 aa).

PFTB repeat units lie at residues 101 to 143 (LCRA…GALD), 151 to 192 (QREI…RLMG), 456 to 507 (QESY…STTD), 517 to 558 (IHEC…PGYK), 594 to 634 (IQEG…LASG), 643 to 684 (IQRA…HVVH), and 705 to 752 (LHRA…WALG). Catalysis depends on Asp488, which acts as the Proton donor.

It belongs to the terpene cyclase/mutase family.

It catalyses the reaction pre-alpha-onocerin = alpha-onocerin. The protein operates within secondary metabolite biosynthesis; terpenoid biosynthesis. Functionally, oxidosqualene cyclase involved in the biosynthesis of alpha-onocerin, a triterpenoid characterized by a symmetrical structure due to cyclizations at both termini of dioxidosqualene that inhibits acetylcholinesterase. Catalyzes the second half of the cyclization, exclusively from pre-alpha-onocerin. In Lycopodium clavatum (Stag's-horn clubmoss), this protein is Alpha-onocerin synthase LCD.